Here is a 110-residue protein sequence, read N- to C-terminus: UPF0122 protein SE_0911 (110 aa).

It belongs to the UPF0122 family.

In terms of biological role, might take part in the signal recognition particle (SRP) pathway. This is inferred from the conservation of its genetic proximity to ftsY/ffh. May be a regulatory protein. This is UPF0122 protein SE_0911 from Staphylococcus epidermidis (strain ATCC 12228 / FDA PCI 1200).